The sequence spans 313 residues: Acetaldehyde dehydrogenase 2 (313 aa).

An NAD(+)-binding site is contributed by 12 to 15 (SGNI). Cys132 functions as the Acyl-thioester intermediate in the catalytic mechanism. NAD(+) is bound by residues 163-171 (SAGPGTRAN) and Asn287.

Belongs to the acetaldehyde dehydrogenase family.

It carries out the reaction acetaldehyde + NAD(+) + CoA = acetyl-CoA + NADH + H(+). This chain is Acetaldehyde dehydrogenase 2 (amnH), found in Paraburkholderia xenovorans (strain LB400).